A 290-amino-acid polypeptide reads, in one-letter code: Nitrogenase iron protein 2 (290 aa).

10–17 (GKGGIGKS) contributes to the ATP binding site. A [4Fe-4S] cluster-binding site is contributed by Cys98. Arg101 is modified (ADP-ribosylarginine; by dinitrogenase reductase ADP-ribosyltransferase). Cys133 contributes to the [4Fe-4S] cluster binding site.

This sequence belongs to the NifH/BchL/ChlL family. In terms of assembly, homodimer. It depends on [4Fe-4S] cluster as a cofactor. In terms of processing, the reversible ADP-ribosylation of Arg-101 inactivates the nitrogenase reductase and regulates nitrogenase activity.

It carries out the reaction N2 + 8 reduced [2Fe-2S]-[ferredoxin] + 16 ATP + 16 H2O = H2 + 8 oxidized [2Fe-2S]-[ferredoxin] + 2 NH4(+) + 16 ADP + 16 phosphate + 6 H(+). Its function is as follows. The key enzymatic reactions in nitrogen fixation are catalyzed by the nitrogenase complex, which has 2 components: the iron protein (component 2) and a component 1 which is either a molybdenum-iron protein, a vanadium-iron, or an iron-iron protein. This chain is Nitrogenase iron protein 2 (vnfH), found in Azotobacter chroococcum mcd 1.